A 551-amino-acid polypeptide reads, in one-letter code: Glucans biosynthesis protein D (551 aa).

The segment at residues 1-32 (MDRRRFIKGSMAMAAVCGTSGIASLFSQAAFA) is a signal peptide (tat-type signal).

It belongs to the OpgD/OpgG family. Post-translationally, predicted to be exported by the Tat system. The position of the signal peptide cleavage has not been experimentally proven.

The protein localises to the periplasm. It functions in the pathway glycan metabolism; osmoregulated periplasmic glucan (OPG) biosynthesis. Its function is as follows. Probably involved in the control of the structural glucose backbone of osmoregulated periplasmic glucans (OPGs). The polypeptide is Glucans biosynthesis protein D (Shigella dysenteriae serotype 1 (strain Sd197)).